We begin with the raw amino-acid sequence, 348 residues long: N-(sulfonatooxy)prop-2-enimidothioate sulfolyase (348 aa).

Kelch repeat units lie at residues 1-33 (MART…VIGD), 34-85 (KLYC…VAVG), 87-133 (KLYV…FHSM), 139-194 (HVYV…VVQG), 209-254 (KIPT…FAHA), 259-314 (YIII…ASTT), and 322-348 (GLLV…NSST). A (Z)-N-(sulfonatooxy)alkanimidothioate-binding residues include Glu46, Arg94, Thr129, Phe130, and Arg157. Arg94 serves as the catalytic Proton donor. Catalysis depends on Arg157, which acts as the Proton donor. Residue Glu220 is the Proton acceptor of the active site. Glu266 is a binding site for Fe(2+). Position 269 (Arg269) interacts with a (Z)-N-(sulfonatooxy)alkanimidothioate. The Fe(2+) site is built by Asp270 and His274. 2 residues coordinate a (Z)-N-(sulfonatooxy)alkanimidothioate: Trp309 and Val310.

As to quaternary structure, homodimer. The cofactor is Fe(2+). In terms of tissue distribution, expressed constitutively in roots, stems, leaves, flowers, siliques and seedlings.

The enzyme catalyses (Z)-N-(sulfonatooxy)prop-2-enimidothioate = allyl thiocyanate + sulfate. The catalysed reaction is (Z)-N-(sulfonatooxy)prop-2-enimidothioate = 2-(thiiran-2-yl)acetonitrile + sulfate. It catalyses the reaction (Z)-N-(sulfonatooxy)prop-2-enimidothioate = allyl isothiocyanate + sulfate. It carries out the reaction (Z)-phenyl-N-(sulfonatooxy)methanimidothioate = phenylacetonitrile + sulfur + sulfate. The enzyme catalyses glucoerucin + H2O = (Z)-4-methylsulfanylbutyl-N-(sulfonatooxy)methanimidothioate + D-glucose. The catalysed reaction is (Z)-4-methylsulfanylbutyl-N-(sulfonatooxy)methanimidothioate = 5-(methylsulfanyl)pentanenitrile + sulfur + sulfate + H(+). Stimulated by the presence of Fe(2+) leading to an increase formation of both thiocyanate and epithionitrile with allylglucosinolate as substrate in the presence of myrosinase. Repressed by EDTA. In terms of biological role, specifier protein that contributes to constitutive and herbivore-induced simple nitrile formation. Catalyzes allylthiocyanate and corresponding epithionitrile formation from allylglucosinolate in the presence of myrosinase. Also converts aliphatic glucosinolates, such as indol-3-ylmethylglucosinolate, 4-methylsulfinylbutylglucosinolate, 4-methylthiobutyl- and benzylisothiocyanate, to simple nitriles. This Thlaspi arvense (Field penny-cress) protein is N-(sulfonatooxy)prop-2-enimidothioate sulfolyase.